The sequence spans 166 residues: CDP-archaeol synthase (166 aa).

Helical transmembrane passes span 7-27 (LLLS…GPFI), 55-75 (LIVA…FFTA), 78-98 (TLIS…GAFI), 116-136 (LDFV…ITWY), and 138-158 (FLFI…VAYL).

The protein belongs to the CDP-archaeol synthase family. Mg(2+) serves as cofactor.

The protein localises to the cell membrane. The catalysed reaction is 2,3-bis-O-(geranylgeranyl)-sn-glycerol 1-phosphate + CTP + H(+) = CDP-2,3-bis-O-(geranylgeranyl)-sn-glycerol + diphosphate. Its pathway is membrane lipid metabolism; glycerophospholipid metabolism. Its function is as follows. Catalyzes the formation of CDP-2,3-bis-(O-geranylgeranyl)-sn-glycerol (CDP-archaeol) from 2,3-bis-(O-geranylgeranyl)-sn-glycerol 1-phosphate (DGGGP) and CTP. This reaction is the third ether-bond-formation step in the biosynthesis of archaeal membrane lipids. This chain is CDP-archaeol synthase, found in Saccharolobus islandicus (strain Y.N.15.51 / Yellowstone #2) (Sulfolobus islandicus).